The sequence spans 514 residues: Zinc finger CCCH-type with G patch domain-containing protein (514 aa).

A disordered region spans residues 96–129 (GEEPQPPGAGDGASTGSKDSEEEEEEEDGSSGMK). A compositionally biased stretch (acidic residues) spans 115–124 (SEEEEEEEDG). A C3H1-type zinc finger spans residues 171–197 (KAMKPCPFFLDGKCRFDDSCRFSHGQV). Disordered regions lie at residues 262 to 288 (IPPL…AAED), 363 to 422 (QQRK…AAER), and 494 to 514 (EEHS…MTEF). Residues 272–287 (SSDDDDDDEEEDDAAE) show a composition bias toward acidic residues. A G-patch domain is found at 315–373 (TRGIGSKLLARMGYEIGKGLGRNAEGRVEPIQAVLLPKGKSLDQCIEMQQRKKAGGKRE). Residues 365–383 (RKKAGGKREHKAGKRRPRA) are compositionally biased toward basic residues.

The protein resides in the nucleus. Transcription repressor that specifically binds the 5'-GGAG[GA]A[GA]A-3' consensus sequence. Represses transcription by recruiting the chromatin multiprotein complex NuRD to target promoters. Negatively regulates expression of EGFR, a gene involved in cell proliferation, survival and migration. This is Zinc finger CCCH-type with G patch domain-containing protein (zgpat) from Xenopus tropicalis (Western clawed frog).